The following is a 2227-amino-acid chain: Genome polyprotein (2227 aa).

Short sequence motifs ((L)YPX(n)L motif) lie at residues 167–171 and 200–205; these read YPHGL and YPVWEL. The segment at 766–836 is involved in P1-2A pentamerization; sequence MMSRIAAGDL…PRKMKGLFSQ (71 aa). A helical membrane pass occupies residues 1011 to 1031; it reads TVEIINTVLCFVKSGILLYVI. A membrane-penetrating ability region spans residues 1043-1070; the sequence is IGLLRVMNYADIGCSVISCGKVFSKMLE. Residues 1127–1152 adopt a coiled-coil conformation; the sequence is KKKDILNILKDNQQKIEKAIEEADNF. An SF3 helicase domain is found at 1204-1366; it reads HQKLKNLGSI…SFFKNPHNDM (163 aa). Position 1230-1237 (1230-1237) interacts with ATP; sequence GKRGGGKS. Residues 1462–1482 form a helical membrane-spanning segment; the sequence is WVAVGAAVGILGVLVGGWFVY. An O-(5'-phospho-RNA)-tyrosine modification is found at Tyr-1499. The region spanning 1514–1728 is the Peptidase C3 domain; sequence DPVESQSTLE…VAKLVTQEMF (215 aa). Catalysis depends on for protease 3C activity residues His-1563, Asp-1603, and Cys-1691. Positions 1976–2097 constitute a RdRp catalytic domain; that stretch reads DVGLDLDFSA…VFSRDVQIDN (122 aa).

It belongs to the picornaviridae polyprotein family. As to quaternary structure, homodimer. Homomultimer; probably interacts with membranes in a multimeric form. Seems to assemble into amyloid-like fibers. Homodimer. Monomer. Interacts with protein 3CD. In terms of assembly, interacts with host ACBD3. As to quaternary structure, interacts with protein 3AB. Interacts with human MAVS. In terms of assembly, homodimer; disulfide-linked. As to quaternary structure, homopentamer. Homooligomer. Interacts with capsid protein VP2. Interacts with capsid protein VP3. In terms of assembly, interacts with capsid protein VP1. Interacts with capsid protein VP3. As to quaternary structure, interacts with capsid protein VP1. Interacts with capsid protein VP2. Post-translationally, specific enzymatic cleavages by viral protease in vivo yield a variety of precursors and mature proteins. Polyprotein processing intermediates are produced, such as P1-2A which is a functional precursor of the structural proteins, VP0 which is a VP4-VP2 precursor, VP1-2A precursor, 3ABC precursor which is a stable and catalytically active precursor of 3A, 3B and 3C proteins, 3AB and 3CD precursors. The assembly signal 2A is removed from VP1-2A by a host protease, possibly host Cathepsin L. This cleavage occurs over a region of 3 amino-acids probably generating VP1 proteins with heterogeneous C-termini. During virion maturation, immature virions are rendered infectious following cleavage of VP0 into VP4 and VP2. This maturation seems to be an autocatalytic event triggered by the presence of RNA in the capsid and is followed by a conformational change of the particle. In terms of processing, the assembly signal 2A is removed from VP1-2A by a host protease, possibly host Cathepsin L in naked virions. This cleavage does not occur in enveloped virions. This cleavage occurs over a region of 3 amino-acids probably generating VP1 proteins with heterogeneous C-termini. Post-translationally, VPg is uridylylated prior to priming replication into VPg-pUpU. Unlike other picornaviruses, does not seem to be myristoylated.

The protein localises to the virion. The protein resides in the host endosome. It is found in the host multivesicular body. It localises to the host membrane. Its subcellular location is the host mitochondrion outer membrane. The protein localises to the host cytoplasm. The protein resides in the host cytoplasmic vesicle membrane. The catalysed reaction is RNA(n) + a ribonucleoside 5'-triphosphate = RNA(n+1) + diphosphate. It carries out the reaction a ribonucleoside 5'-triphosphate + H2O = a ribonucleoside 5'-diphosphate + phosphate + H(+). The enzyme catalyses Selective cleavage of Gln-|-Gly bond in the poliovirus polyprotein. In other picornavirus reactions Glu may be substituted for Gln, and Ser or Thr for Gly.. In terms of biological role, capsid proteins VP1, VP2, and VP3 form a closed capsid enclosing the viral positive strand RNA genome. All these proteins contain a beta-sheet structure called beta-barrel jelly roll. Together they form an icosahedral capsid (T=3) composed of 60 copies of each VP1, VP2, and VP3, with a diameter of approximately 300 Angstroms. VP1 is situated at the 12 fivefold axes, whereas VP2 and VP3 are located at the quasi-sixfold axes. The naked capsid interacts with the host receptor HAVCR1 to provide virion attachment to and probably entry into the target cell. VP0 precursor is a component of the immature procapsids. Its function is as follows. Plays a role in the assembly of the 12 pentamers into an icosahedral structure. Has not been detected in mature virions, supposedly owing to its small size. Functionally, precursor component of immature procapsids that corresponds to an extended form of the structural protein VP1. After maturation, possibly by the host Cathepsin L, the assembly signal 2A is cleaved to give rise to the mature VP1 protein. In terms of biological role, functions as a viroporin. Affects membrane integrity and causes an increase in membrane permeability. Involved in host intracellular membrane rearrangements probably to give rise to the viral factories. Does not disrupt calcium homeostasis or glycoprotein trafficking. Antagonizes the innate immune response of the host by suppressing IFN-beta synthesis, which it achieves by interfering with the RIG-I/IFIH1 pathway. Affects membrane integrity and causes an increase in membrane permeability. Its function is as follows. Associates with and induces structural rearrangements of intracellular membranes. Displays RNA-binding activity. Functionally, the precursor 3ABC is targeted to the mitochondrial membrane where protease 3C activity cleaves and inhibits the host antiviral protein MAVS, thereby disrupting activation of IRF3 through the IFIH1/MDA5 pathway. In vivo, the protease activity of 3ABC precursor is more efficient in cleaving the 2BC precursor than that of protein 3C. The 3ABC precursor may therefore play a role in the proteolytic processing of the polyprotein. Possible viroporin. In terms of biological role, interacts with the 3CD precursor and with RNA structures found at both the 5'- and 3'-termini of the viral genome. Since the 3AB precursor contains the hydrophobic domain 3A, it probably anchors the whole viral replicase complex to intracellular membranes on which viral RNA synthesis occurs. May serve as membrane anchor to the 3AB and 3ABC precursors via its hydrophobic domain. May interact with RNA. Its function is as follows. Acts as a primer for viral RNA replication and remains covalently bound to viral genomic RNA. VPg is uridylylated prior to priming replication into VPg-pUpU. The VPg-pUpU is then used as primer on the genomic RNA poly(A) by the RNA-dependent RNA polymerase to replicate the viral genome. Functionally, cysteine protease that generates mature viral proteins from the precursor polyprotein. In addition to its proteolytic activity, it binds to viral RNA, and thus influences viral genome replication. RNA and substrate bind cooperatively to the protease. Cleaves IKBKG/NEMO to impair innate immune signaling. Cleaves host PABPC1 which may participate in the switch of viral translation to RNA synthesis. In terms of biological role, interacts with the 3AB precursor and with RNA structures found at both the 5'- and 3'-termini of the viral genome. Disrupts TLR3 signaling by degrading the host adapter protein TICAM1/TRIF. RNA-directed RNA polymerase 3D-POL replicates genomic and antigenomic RNA by recognizing replications specific signals. The polypeptide is Genome polyprotein (Cercopithecus hamlyni (Owl-faced monkey)).